Reading from the N-terminus, the 911-residue chain is Disks large homolog 1 (911 aa).

One can recognise an L27 domain in the interval 4 to 64 (RKQDTQRALH…FYEVTLLDNP (61 aa)). S39 carries the phosphoserine; by CaMK2 modification. The interval 70–105 (SKQCEPVQPGNPWESGSLSSAAVTSESLPGGLSPPV) is disordered. Residues 83 to 96 (ESGSLSSAAVTSES) are compositionally biased toward polar residues. 3 positions are modified to phosphoserine: S122, S138, and S158. Residues 162–212 (PTEAVPPSSPIVPVTPALPVPAESPVVLPSTPQANPPPVLVNTDSLETPTY) form an interaction with SH3 domains region. 2 consecutive PDZ domains span residues 224 to 310 (EITL…VKRR) and 318 to 404 (EIKL…AAKP). Residues 224-545 (EITLERGNSG…QAVTIVAQYR (322 aa)) are required for interaction with MARCHF2. The residue at position 232 (S232) is a Phosphoserine; by CaMK2. A Phosphotyrosine modification is found at Y398. Residues 419 to 441 (TNSSSQSVDNHVSPSSYLGQTPA) show a composition bias toward polar residues. The segment at 419–443 (TNSSSQSVDNHVSPSSYLGQTPASP) is disordered. One can recognise a PDZ 3 domain in the interval 465-545 (KVVLHRGSTG…QAVTIVAQYR (81 aa)). S567, S572, S574, S578, S597, S618, S684, S687, and S841 each carry phosphoserine. Positions 580-650 (KRSLYVRALF…PSKRRVEKKE (71 aa)) constitute an SH3 domain. Residues 662–696 (KTRGDKGEIPDDMGSKGLKHVTSNASDSESSYHEY) form a disordered region. The Guanylate kinase-like domain occupies 721 to 896 (TRPVIILGPM…IYNQVKQIIE (176 aa)).

It belongs to the MAGUK family. As to quaternary structure, homotetramer. Interacts (via guanylate kinase-like domain) with DLGAP1, DLGAP2, DLGAP3, DLGAP4 and MAP1A. Interacts (via guanylate kinase-like domain) with KIF13B. May interact with HTR2A. Interacts (via PDZ domains) with GRIA1. Interacts (via PDZ domains) with GRIN2A. Interacts (via PDZ domains) with KCND2 and KCND3. Interacts (via PDZ domains) with KCNA1, KCNA2, KCNA3 and KCNA4. Interacts (via PDZ domains) with ADGRA3. Interacts with KCNF1. Interacts with CAMK2. Interacts with cytoskeleton-associated protein EPB41. Interacts with cytoskeleton-associated protein EZR. Found in a complex with KCNA5 and CAV3. Found in a complex with APC and CTNNB1. Interacts (via PDZ domains) with APC. Interacts with CDH1 through binding to PIK3R1. Forms multiprotein complexes with CASK, LIN7A, LIN7B, LIN7C, APBA1, and KCNJ12. Interacts with TOPK. Forms a tripartite complex composed of DLG1, MPP7 and LIN7 (LIN7A or LIN7C). May interact with TJAP1. Interacts with PTEN. Interacts with FRMPD4 (via C-terminus). Interacts with LRFN1 and LRFN2. Interacts with LRFN4 and SFPQ. Interacts (via PDZ domains) with ADGRA2 (via PDZ-binding motif). Interacts with ADAM10; this interaction recruits ADAM10 to the cell membrane during long-term depression in hippocampal neurons. Interacts with DGKI (via PDZ-binding motif). Interacts (via PDZ domains) with MARCHF2 (via PDZ domain); the interaction leads to DLG1 ubiqtuitination and degradation. Interacts (via N-terminus) with MPP3; this interaction connects CADM1 with DLG1 and links CADM1 with the regulatory subunit of phosphoinositide-3-kinase (PI3K) by forming a multiprotein complex and participates in cell spreading. In terms of processing, phosphorylated by MAPK12. Phosphorylation of Ser-39 modulates transport to the plasma membrane. Phosphorylation of Ser-232 regulates association with GRIN2A. Ubiquitinated; by MARCHF2 which results in its degradation. In terms of tissue distribution, widely expressed. Strongly expressed in epithelial cells, in the small intestine it is only detected in the vili. Expressed in brain, heart (at protein level), muscle, lung and liver. In the brain it was detected in olfactory bulbs, cerebral cortex, hippocampus, and spinal cord (at protein level).

Its subcellular location is the cell membrane. The protein resides in the basolateral cell membrane. It is found in the endoplasmic reticulum membrane. The protein localises to the postsynaptic density. It localises to the synapse. Its subcellular location is the sarcolemma. The protein resides in the cell junction. It is found in the cytoplasm. The protein localises to the apical cell membrane. In terms of biological role, essential multidomain scaffolding protein required for normal development. Recruits channels, receptors and signaling molecules to discrete plasma membrane domains in polarized cells. Promotes epithelial cell layer barrier function via maintaining cell-cell adhesion. May play a role in adherens junction assembly, signal transduction, cell proliferation, synaptogenesis and lymphocyte activation. Regulates the excitability of cardiac myocytes by modulating the functional expression of Kv4 channels. Functional regulator of Kv1.5 channel. During long-term depression in hippocampal neurons, it recruits ADAM10 to the plasma membrane. This Rattus norvegicus (Rat) protein is Disks large homolog 1.